The sequence spans 174 residues: Adipose-secreted signaling protein (174 aa).

At alanine 2 the chain carries N-acetylalanine. Threonine 147 is subject to Phosphothreonine.

Belongs to the ADISSP family.

It is found in the secreted. Functionally, adipocyte-secreted protein (adipokine) that acts as a key regulator for white adipose tissue (WAT) thermogenesis and glucose homeostasis at least in part through activation of protein kinase A (PKA). This is Adipose-secreted signaling protein from Rattus norvegicus (Rat).